We begin with the raw amino-acid sequence, 338 residues long: MTRLVTPDITEDDLIESSLRPRALDDYIGQEKAKGNLRVFIDAARKRGEALDHVLLYGPPGLGKTTLANIIACEMGVNIKSTSGPVIERPGDLAAILTNLEPHDVLFIDEIHRLSHVVEEILYPAMEDYQLDIIIGQGPSARTIKLDLPKFTLVGATTRAGLLSSPLRDRFGVISRLEFYTDDELTTIVTRSARILNIGIEPEGGRELARRSRGTPRIANRLLRRVRDFAQVRADGVITAPVVDESLKLLEIDEKGFDHMDRTIMLTIIDKFGGGPVGLDTIAAAIGEERDTIEDVYEPFLIQHGFINRTPRGRVATRAAYEHFGRIAPPSSSQGNLF.

Positions 1-180 are large ATPase domain (RuvB-L); sequence MTRLVTPDIT…FGVISRLEFY (180 aa). ATP contacts are provided by residues leucine 19, arginine 20, glycine 61, lysine 64, threonine 65, threonine 66, 127-129, arginine 170, tyrosine 180, and arginine 217; that span reads EDY. Threonine 65 lines the Mg(2+) pocket. Residues 181 to 251 form a small ATPAse domain (RuvB-S) region; sequence TDDELTTIVT…VVDESLKLLE (71 aa). The segment at 254–338 is head domain (RuvB-H); it reads EKGFDHMDRT…PPSSSQGNLF (85 aa). 3 residues coordinate DNA: arginine 290, arginine 309, and arginine 314.

It belongs to the RuvB family. Homohexamer. Forms an RuvA(8)-RuvB(12)-Holliday junction (HJ) complex. HJ DNA is sandwiched between 2 RuvA tetramers; dsDNA enters through RuvA and exits via RuvB. An RuvB hexamer assembles on each DNA strand where it exits the tetramer. Each RuvB hexamer is contacted by two RuvA subunits (via domain III) on 2 adjacent RuvB subunits; this complex drives branch migration. In the full resolvosome a probable DNA-RuvA(4)-RuvB(12)-RuvC(2) complex forms which resolves the HJ.

The protein localises to the cytoplasm. It carries out the reaction ATP + H2O = ADP + phosphate + H(+). Its function is as follows. The RuvA-RuvB-RuvC complex processes Holliday junction (HJ) DNA during genetic recombination and DNA repair, while the RuvA-RuvB complex plays an important role in the rescue of blocked DNA replication forks via replication fork reversal (RFR). RuvA specifically binds to HJ cruciform DNA, conferring on it an open structure. The RuvB hexamer acts as an ATP-dependent pump, pulling dsDNA into and through the RuvAB complex. RuvB forms 2 homohexamers on either side of HJ DNA bound by 1 or 2 RuvA tetramers; 4 subunits per hexamer contact DNA at a time. Coordinated motions by a converter formed by DNA-disengaged RuvB subunits stimulates ATP hydrolysis and nucleotide exchange. Immobilization of the converter enables RuvB to convert the ATP-contained energy into a lever motion, pulling 2 nucleotides of DNA out of the RuvA tetramer per ATP hydrolyzed, thus driving DNA branch migration. The RuvB motors rotate together with the DNA substrate, which together with the progressing nucleotide cycle form the mechanistic basis for DNA recombination by continuous HJ branch migration. Branch migration allows RuvC to scan DNA until it finds its consensus sequence, where it cleaves and resolves cruciform DNA. The protein is Holliday junction branch migration complex subunit RuvB of Geobacter metallireducens (strain ATCC 53774 / DSM 7210 / GS-15).